Here is a 210-residue protein sequence, read N- to C-terminus: dTTP/UTP pyrophosphatase (210 aa).

D85 serves as the catalytic Proton acceptor.

This sequence belongs to the Maf family. YhdE subfamily. A divalent metal cation serves as cofactor.

The protein resides in the cytoplasm. The catalysed reaction is dTTP + H2O = dTMP + diphosphate + H(+). The enzyme catalyses UTP + H2O = UMP + diphosphate + H(+). Functionally, nucleoside triphosphate pyrophosphatase that hydrolyzes dTTP and UTP. May have a dual role in cell division arrest and in preventing the incorporation of modified nucleotides into cellular nucleic acids. This Saccharophagus degradans (strain 2-40 / ATCC 43961 / DSM 17024) protein is dTTP/UTP pyrophosphatase.